The primary structure comprises 866 residues: Phospholipase D gamma 3 (866 aa).

One can recognise a C2 domain in the interval 31–170; the sequence is PFDTSSGSLR…CSGNRIEGLF (140 aa). Position 232 (aspartate 232) interacts with Ca(2+). The PLD phosphodiesterase 1 domain occupies 371-406; sequence TIYTHHQKTMIVDAEAAQNRRKIVAFVGGLDLCNGR. Catalysis depends on residues histidine 376, lysine 378, and aspartate 383. Histidine 376 is an a 1,2-diacyl-sn-glycero-3-phosphate binding site. Ca(2+) contacts are provided by histidine 412 and histidine 444. Glutamine 572 is an a 1,2-diacyl-sn-glycero-3-phosphate binding site. Residue serine 692 is modified to Phosphoserine. Residues 712–739 enclose the PLD phosphodiesterase 2 domain; the sequence is FMIYVHSKGMVVDDEFVLIGSANINQRS. Catalysis depends on residues histidine 717, lysine 719, and aspartate 724. Histidine 717 provides a ligand contact to a 1,2-diacyl-sn-glycero-3-phosphate. Glutamate 780 lines the Ca(2+) pocket.

It belongs to the phospholipase D family. C2-PLD subfamily. The cofactor is Ca(2+). Highly expressed in inflorescences and old leaves, moderately in stems, roots, siliques and young leaves and low in flowers.

It is found in the cytoplasm. The protein localises to the membrane. The enzyme catalyses a 1,2-diacyl-sn-glycero-3-phosphocholine + H2O = a 1,2-diacyl-sn-glycero-3-phosphate + choline + H(+). With respect to regulation, inhibited by neomycin. Hydrolyzes glycerol-phospholipids at the terminal phosphodiesteric bond to generate phosphatidic acids (PA). Plays an important role in various cellular processes, including phytohormone action, vesicular trafficking, secretion, cytoskeletal arrangement, meiosis, tumor promotion, pathogenesis, membrane deterioration and senescence. Can use phosphatidylserine but prefers ethanolamine-containing lipids as substrates. The protein is Phospholipase D gamma 3 of Arabidopsis thaliana (Mouse-ear cress).